The chain runs to 292 residues: tRNA dimethylallyltransferase (292 aa).

10–17 (GPTASGKS) is an ATP binding site. Residue 12–17 (TASGKS) coordinates substrate. Interaction with substrate tRNA regions lie at residues 35–38 (DSMQ) and 159–163 (QRIVR).

This sequence belongs to the IPP transferase family. In terms of assembly, monomer. Mg(2+) is required as a cofactor.

It carries out the reaction adenosine(37) in tRNA + dimethylallyl diphosphate = N(6)-dimethylallyladenosine(37) in tRNA + diphosphate. Its function is as follows. Catalyzes the transfer of a dimethylallyl group onto the adenine at position 37 in tRNAs that read codons beginning with uridine, leading to the formation of N6-(dimethylallyl)adenosine (i(6)A). The protein is tRNA dimethylallyltransferase of Chelativorans sp. (strain BNC1).